Consider the following 386-residue polypeptide: Patatin-2-Kuras 2 (386 aa).

The signal sequence occupies residues 1 to 23 (MATTKSFLILFFMILATTSSTCA). Positions 32-229 (LSIDGGGIKG…TVGDPALLSL (198 aa)) constitute a PNPLA domain. The short motif at 36–41 (GGGIKG) is the GXGXXG element. The GXSXG signature appears at 75–79 (GTSTG). Ser77 functions as the Nucleophile in the catalytic mechanism. A glycan (N-linked (GlcNAc...) asparagine) is linked at Asn115. Asp215 serves as the catalytic Proton acceptor. Residues 215–217 (DGA) carry the DGA/G motif. Residues 321–384 (ENALTGTTTE…DRKKLRANKA (64 aa)) adopt a coiled-coil conformation.

Belongs to the patatin family.

It localises to the vacuole. Functionally, probable lipolytic acyl hydrolase (LAH), an activity which is thought to be involved in the response of tubers to pathogens. In Solanum tuberosum (Potato), this protein is Patatin-2-Kuras 2 (pat2-k2).